Reading from the N-terminus, the 92-residue chain is Alpha-elapitoxin-Lh2a (92 aa).

The N-terminal stretch at 1-21 is a signal peptide; that stretch reads MKTLLLTLVVVTIVCLDLGDS. Intrachain disulfides connect Cys24–Cys41, Cys34–Cys62, Cys47–Cys51, Cys66–Cys77, and Cys78–Cys83.

It belongs to the three-finger toxin family. Long-chain subfamily. Type II alpha-neurotoxin sub-subfamily. As to expression, expressed by the venom gland.

The protein localises to the secreted. Functionally, binds with high affinity to muscular (alpha-1/CHRNA1) and neuronal (alpha-7/CHRNA7) nicotinic acetylcholine receptor (nAChR) and inhibits acetylcholine from binding to the receptor, thereby impairing neuromuscular and neuronal transmission. The polypeptide is Alpha-elapitoxin-Lh2a (Hydrophis hardwickii (Hardwick's spine-bellied seasnake)).